The sequence spans 248 residues: MNKELLLGVNIDHIATIRQARGTRYPDPVQAAMDAEEAGADGITLHMREDLRHIQARDVRLIKQVLQTRMNLELAVTEAMLDFAEEILPEHACLVPEKREELTTEGGLDILTHRNVVERAVRRLQLMGSEVSLFIDPDKEQIRAAVDVGAPVIELHTGCYADATSEEKQHYELQRIKEAAEFAASLNLVVNAGHGLHYHNVKPIAAIRELNELNIGHAIIARALFCGLKEAVRHMRQLMQEARLYVND.

N10 serves as a coordination point for 3-amino-2-oxopropyl phosphate. 12-13 serves as a coordination point for 1-deoxy-D-xylulose 5-phosphate; that stretch reads DH. R21 lines the 3-amino-2-oxopropyl phosphate pocket. H46 functions as the Proton acceptor in the catalytic mechanism. R48 and H53 together coordinate 1-deoxy-D-xylulose 5-phosphate. The active-site Proton acceptor is E73. T103 is a 1-deoxy-D-xylulose 5-phosphate binding site. H194 functions as the Proton donor in the catalytic mechanism. Residues G195 and 216 to 217 contribute to the 3-amino-2-oxopropyl phosphate site; that span reads GH.

It belongs to the PNP synthase family. Homooctamer; tetramer of dimers.

It is found in the cytoplasm. The enzyme catalyses 3-amino-2-oxopropyl phosphate + 1-deoxy-D-xylulose 5-phosphate = pyridoxine 5'-phosphate + phosphate + 2 H2O + H(+). The protein operates within cofactor biosynthesis; pyridoxine 5'-phosphate biosynthesis; pyridoxine 5'-phosphate from D-erythrose 4-phosphate: step 5/5. Catalyzes the complicated ring closure reaction between the two acyclic compounds 1-deoxy-D-xylulose-5-phosphate (DXP) and 3-amino-2-oxopropyl phosphate (1-amino-acetone-3-phosphate or AAP) to form pyridoxine 5'-phosphate (PNP) and inorganic phosphate. This chain is Pyridoxine 5'-phosphate synthase, found in Legionella pneumophila (strain Paris).